The following is a 285-amino-acid chain: Protease HtpX homolog (285 aa).

The next 2 membrane-spanning stretches (helical) occupy residues Thr-7–Gly-27 and Gly-30–Asp-50. His-131 contacts Zn(2+). Glu-132 is an active-site residue. Residue His-135 coordinates Zn(2+). A run of 2 helical transmembrane segments spans residues Ile-146 to Gly-166 and Ile-177 to Ile-197. Glu-202 contacts Zn(2+).

Belongs to the peptidase M48B family. Zn(2+) serves as cofactor.

The protein resides in the cell inner membrane. The sequence is that of Protease HtpX homolog from Burkholderia thailandensis (strain ATCC 700388 / DSM 13276 / CCUG 48851 / CIP 106301 / E264).